Here is a 429-residue protein sequence, read N- to C-terminus: tRNA(Ile2) 2-agmatinylcytidine synthetase TiaS (429 aa).

The disordered stretch occupies residues lysine 403 to leucine 429.

It belongs to the TiaS family.

The protein localises to the cytoplasm. The catalysed reaction is cytidine(34) in tRNA(Ile2) + agmatine + ATP + H2O = 2-agmatinylcytidine(34) in tRNA(Ile2) + AMP + 2 phosphate + 2 H(+). In terms of biological role, ATP-dependent agmatine transferase that catalyzes the formation of 2-agmatinylcytidine (agm2C) at the wobble position (C34) of tRNA(Ile2), converting the codon specificity from AUG to AUA. The protein is tRNA(Ile2) 2-agmatinylcytidine synthetase TiaS of Hyperthermus butylicus (strain DSM 5456 / JCM 9403 / PLM1-5).